A 206-amino-acid polypeptide reads, in one-letter code: Large ribosomal subunit protein uL4 (206 aa).

The tract at residues 47 to 76 (GTQSAKTRAEVSGGGIKPWRQKGTGRARQG) is disordered.

Belongs to the universal ribosomal protein uL4 family. Part of the 50S ribosomal subunit.

Functionally, one of the primary rRNA binding proteins, this protein initially binds near the 5'-end of the 23S rRNA. It is important during the early stages of 50S assembly. It makes multiple contacts with different domains of the 23S rRNA in the assembled 50S subunit and ribosome. In terms of biological role, forms part of the polypeptide exit tunnel. In Clostridium botulinum (strain Okra / Type B1), this protein is Large ribosomal subunit protein uL4.